The following is a 269-amino-acid chain: Energy-coupling factor transporter transmembrane protein EcfT (269 aa).

Helical transmembrane passes span 28 to 48 (MIIYIIIIFWANNVVTNLLLL), 49 to 69 (AFTLLLIFLSQIKWSFFFNGV), 73 to 93 (IGIILFTTLFQVFFTQGGSVL), 109 to 129 (AILIFMRFVLIIFFSTLLTLT), and 246 to 266 (TLAIILVVILGIFLFCLKSPS).

The protein belongs to the energy-coupling factor EcfT family. Forms a stable energy-coupling factor (ECF) transporter complex composed of 2 membrane-embedded substrate-binding proteins (S component), 2 ATP-binding proteins (A component) and 2 transmembrane proteins (T component). May be able to interact with more than 1 S component at a time.

It is found in the cell membrane. In terms of biological role, transmembrane (T) component of an energy-coupling factor (ECF) ABC-transporter complex. Unlike classic ABC transporters this ECF transporter provides the energy necessary to transport a number of different substrates. The protein is Energy-coupling factor transporter transmembrane protein EcfT of Streptococcus equi subsp. equi (strain 4047).